The sequence spans 140 residues: Large ribosomal subunit protein uL14 (140 aa).

The protein belongs to the universal ribosomal protein uL14 family. As to quaternary structure, component of the large ribosomal subunit.

It is found in the cytoplasm. Component of the large ribosomal subunit. The ribosome is a large ribonucleoprotein complex responsible for the synthesis of proteins in the cell. This is Large ribosomal subunit protein uL14 (rpl23) from Danio rerio (Zebrafish).